Here is an 813-residue protein sequence, read N- to C-terminus: Cadherin-22 (813 aa).

The N-terminal stretch at 1–33 (MRPRPAGALRAGAALSPVLLLLLLLQLLGHLWA) is a signal peptide. Over 34-621 (ASTPAPSSLS…AFVMAASLSP (588 aa)) the chain is Extracellular. Cadherin domains follow at residues 61 to 165 (WVWN…EPRF), 166 to 274 (LHGP…PPRF), 275 to 391 (PQKM…PPEF), 392 to 495 (RPPS…NPPE), and 496 to 613 (LATP…TTAF). N-linked (GlcNAc...) asparagine glycosylation is present at Asn159. N-linked (GlcNAc...) asparagine glycosylation is found at Asn463 and Asn609. Residues 622-642 (GALIALLVCVLILVVLALLIL) traverse the membrane as a helical segment. Residues 643-813 (TLRRHHKSHL…HRGDDEAPAS (171 aa)) lie on the Cytoplasmic side of the membrane. The disordered stretch occupies residues 696-726 (GGDPGGGAASPPQAASSSERHSLPRGPSSPE).

Strongly expressed in the pituitary gland and the brain (in the inner granular and glomerular layers of the olfactory bulb, anterior olfactory nucleus, primary olfactory cortex, Purkinje cell layer of cerebellum, and pineal gland). Low expression in lung and heart. No expression in submandibular gland, thymus, liver, spleen, adrenal, and kidney.

The protein resides in the cell membrane. Its function is as follows. Cadherins are calcium-dependent cell adhesion proteins. They preferentially interact with themselves in a homophilic manner in connecting cells; cadherins may thus contribute to the sorting of heterogeneous cell types. PB-cadherins may have a role in the morphological organization of pituitary gland and brain tissues. The polypeptide is Cadherin-22 (Cdh22) (Rattus norvegicus (Rat)).